Here is a 553-residue protein sequence, read N- to C-terminus: Methionine--tRNA ligase (553 aa).

A 'HIGH' region motif is present at residues 12–22; the sequence is PYANSQLHLGH. Residues C144, C147, C157, and C160 each contribute to the Zn(2+) site. A 'KMSKS' region motif is present at residues 332–336; sequence KFSKS. K335 is a binding site for ATP.

It belongs to the class-I aminoacyl-tRNA synthetase family. MetG type 1 subfamily. Monomer. It depends on Zn(2+) as a cofactor.

The protein resides in the cytoplasm. The enzyme catalyses tRNA(Met) + L-methionine + ATP = L-methionyl-tRNA(Met) + AMP + diphosphate. In terms of biological role, is required not only for elongation of protein synthesis but also for the initiation of all mRNA translation through initiator tRNA(fMet) aminoacylation. This chain is Methionine--tRNA ligase, found in Dehalococcoides mccartyi (strain ATCC BAA-2266 / KCTC 15142 / 195) (Dehalococcoides ethenogenes (strain 195)).